The following is a 436-amino-acid chain: Putative UDP-arabinose 4-epimerase 4 (436 aa).

The tract at residues 1-20 is disordered; the sequence is MLNSSGVRTQRRSPRPLSLG. Residues 1-60 lie on the Cytoplasmic side of the membrane; it reads MLNSSGVRTQRRSPRPLSLGGRKIITPTKFAYDHHNPDKVLDFVEMDCLEPKTKNNLTGK. A helical; Signal-anchor for type II membrane protein transmembrane segment spans residues 61–81; sequence LLLVASLLILAIIVISQSSSF. Over 82-436 the chain is Lumenal; sequence TSPSAFSQRE…KIHPHGYNSY (355 aa). 96-127 is an NAD(+) binding site; the sequence is HVLVTGGAGYIGSHAALRLLRDSYRVTIVDNL. Catalysis depends on Tyr244, which acts as the Proton acceptor.

This sequence belongs to the NAD(P)-dependent epimerase/dehydratase family. It depends on NAD(+) as a cofactor.

The protein resides in the golgi apparatus. Its subcellular location is the golgi stack membrane. It carries out the reaction UDP-beta-L-arabinopyranose = UDP-alpha-D-xylose. It functions in the pathway nucleotide-sugar biosynthesis; UDP-L-arabinose biosynthesis; UDP-L-arabinose from UDP-alpha-D-xylose: step 1/1. Its pathway is cell wall biogenesis; cell wall polysaccharide biosynthesis. In Arabidopsis thaliana (Mouse-ear cress), this protein is Putative UDP-arabinose 4-epimerase 4.